The chain runs to 156 residues: MSRRRTQKKRIVMPDPVYDSRLVELLVRQLMREGKKSLAYRICYESMNRVADATQQDPLVIVEQAIRNATPLVEVKARRIGGSTYQVPLEVASERGTALAIRWILSVCRKKTGRPMAAKLTAELLDAAKNSGLAVRKRDEIHKMADANKAFAKYRF.

Belongs to the universal ribosomal protein uS7 family. As to quaternary structure, part of the 30S ribosomal subunit.

The protein resides in the plastid. The protein localises to the chloroplast. One of the primary rRNA binding proteins, it binds directly to 16S rRNA where it nucleates assembly of the head domain of the 30S subunit. The protein is Small ribosomal subunit protein uS7c (rps7) of Chlorella vulgaris (Green alga).